Consider the following 95-residue polypeptide: MRYQVKFREDALKEWQKLDKAIQQQFAKKLKKCCDNPHIPSAKLRGIKDCYKIKLRASGFRLVYQVIDEQLIIAVVAVGKRERSDVYNLASERMR.

Belongs to the RelE toxin family.

Its function is as follows. Toxic component of a type II toxin-antitoxin (TA) system. This chain is Putative RelE-like toxin protein, found in Escherichia coli.